We begin with the raw amino-acid sequence, 102 residues long: Small ribosomal subunit protein eS24 (102 aa).

Belongs to the eukaryotic ribosomal protein eS24 family.

This Methanococcoides burtonii (strain DSM 6242 / NBRC 107633 / OCM 468 / ACE-M) protein is Small ribosomal subunit protein eS24.